Consider the following 74-residue polypeptide: Protein kish-B (74 aa).

A signal peptide spans 1–22 (MTNVYSLDGILVFGLLFVCTCA). Over 23 to 52 (YFKKVPRLKTWLLSEKKGVWGVFYKAAVIG) the chain is Extracellular. Residues 53 to 73 (TRLHAAVAIACIVMAFYVLFI) traverse the membrane as a helical segment. Lys-74 is a topological domain (cytoplasmic).

It belongs to the KISH family.

It is found in the golgi apparatus membrane. Functionally, involved in the early part of the secretory pathway. This is Protein kish-B (TMEM167B) from Bos taurus (Bovine).